The chain runs to 71 residues: Permeability factor 2 (71 aa).

2 disulfide bridges follow: Cys7–Cys33 and Cys9–Cys49.

Belongs to the intercrine alpha (chemokine CxC) family. Homodimer.

The protein localises to the secreted. Its function is as follows. Has chemotactic activity for neutrophils. The chain is Permeability factor 2 from Oryctolagus cuniculus (Rabbit).